The chain runs to 179 residues: Probable RNA 2'-phosphotransferase (179 aa).

It belongs to the KptA/TPT1 family.

Removes the 2'-phosphate from RNA via an intermediate in which the phosphate is ADP-ribosylated by NAD followed by a presumed transesterification to release the RNA and generate ADP-ribose 1''-2''-cyclic phosphate (APPR&gt;P). May function as an ADP-ribosylase. This chain is Probable RNA 2'-phosphotransferase, found in Fusobacterium nucleatum subsp. nucleatum (strain ATCC 25586 / DSM 15643 / BCRC 10681 / CIP 101130 / JCM 8532 / KCTC 2640 / LMG 13131 / VPI 4355).